Here is a 168-residue protein sequence, read N- to C-terminus: Cell division inhibitor SulA (168 aa).

Residues 106–112 are ftsZ binding; the sequence is ALLTGNY. The tract at residues 161-168 is lon protease binding; it reads KIHSYLYH.

This sequence belongs to the SulA family. In terms of assembly, interacts with FtsZ. Is rapidly cleaved and degraded by the Lon protease once DNA damage is repaired.

Functionally, component of the SOS system and an inhibitor of cell division. Accumulation of SulA causes rapid cessation of cell division and the appearance of long, non-septate filaments. In the presence of GTP, binds a polymerization-competent form of FtsZ in a 1:1 ratio, thus inhibiting FtsZ polymerization and therefore preventing it from participating in the assembly of the Z ring. This mechanism prevents the premature segregation of damaged DNA to daughter cells during cell division. This chain is Cell division inhibitor SulA, found in Yersinia pestis bv. Antiqua (strain Antiqua).